The chain runs to 540 residues: Light-independent protochlorophyllide reductase subunit B (540 aa).

A [4Fe-4S] cluster-binding site is contributed by D36. D287 (proton donor) is an active-site residue. Substrate is bound at residue 422–423; the sequence is GL.

Belongs to the ChlB/BchB/BchZ family. In terms of assembly, protochlorophyllide reductase is composed of three subunits; BchL, BchN and BchB. Forms a heterotetramer of two BchB and two BchN subunits. It depends on [4Fe-4S] cluster as a cofactor.

The catalysed reaction is chlorophyllide a + oxidized 2[4Fe-4S]-[ferredoxin] + 2 ADP + 2 phosphate = protochlorophyllide a + reduced 2[4Fe-4S]-[ferredoxin] + 2 ATP + 2 H2O. The protein operates within porphyrin-containing compound metabolism; bacteriochlorophyll biosynthesis (light-independent). Functionally, component of the dark-operative protochlorophyllide reductase (DPOR) that uses Mg-ATP and reduced ferredoxin to reduce ring D of protochlorophyllide (Pchlide) to form chlorophyllide a (Chlide). This reaction is light-independent. The NB-protein (BchN-BchB) is the catalytic component of the complex. This chain is Light-independent protochlorophyllide reductase subunit B, found in Rhodopseudomonas palustris (strain TIE-1).